A 147-amino-acid polypeptide reads, in one-letter code: Hemoglobin subunit delta (147 aa).

A Globin domain is found at 3–147 (NLTAAEKTQV…VANALAHKYH (145 aa)). Heme b-binding residues include histidine 64 and histidine 93.

Belongs to the globin family. As to quaternary structure, heterotetramer of two delta chains and two alpha chains. As to expression, red blood cells.

The polypeptide is Hemoglobin subunit delta (HBD) (Loxodonta africana (African elephant)).